The primary structure comprises 446 residues: Tubulin beta-8 chain (446 aa).

Positions 11, 69, 138, 142, 143, 144, 204, and 226 each coordinate GTP. A Mg(2+)-binding site is contributed by glutamate 69. The interval 426–446 (QDATAEDDYDEDDDAAAADEA) is disordered. A compositionally biased stretch (acidic residues) spans 429–446 (TAEDDYDEDDDAAAADEA).

It belongs to the tubulin family. Dimer of alpha and beta chains. A typical microtubule is a hollow water-filled tube with an outer diameter of 25 nm and an inner diameter of 15 nM. Alpha-beta heterodimers associate head-to-tail to form protofilaments running lengthwise along the microtubule wall with the beta-tubulin subunit facing the microtubule plus end conferring a structural polarity. Microtubules usually have 13 protofilaments but different protofilament numbers can be found in some organisms and specialized cells. It depends on Mg(2+) as a cofactor. Expressed in anthers.

The protein resides in the cytoplasm. It localises to the cytoskeleton. Functionally, tubulin is the major constituent of microtubules, a cylinder consisting of laterally associated linear protofilaments composed of alpha- and beta-tubulin heterodimers. Microtubules grow by the addition of GTP-tubulin dimers to the microtubule end, where a stabilizing cap forms. Below the cap, tubulin dimers are in GDP-bound state, owing to GTPase activity of alpha-tubulin. The sequence is that of Tubulin beta-8 chain (TUBB8) from Oryza sativa subsp. japonica (Rice).